Reading from the N-terminus, the 762-residue chain is Endonuclease MutS2 (762 aa).

333-340 (GVNAGGKT) contributes to the ATP binding site. A Smr domain is found at 688–762 (LDLRGQRSEE…GGSGVKIVKL (75 aa)).

It belongs to the DNA mismatch repair MutS family. MutS2 subfamily. As to quaternary structure, homodimer. Binds to stalled ribosomes, contacting rRNA.

In terms of biological role, endonuclease that is involved in the suppression of homologous recombination and thus may have a key role in the control of bacterial genetic diversity. Functionally, acts as a ribosome collision sensor, splitting the ribosome into its 2 subunits. Detects stalled/collided 70S ribosomes which it binds and splits by an ATP-hydrolysis driven conformational change. Acts upstream of the ribosome quality control system (RQC), a ribosome-associated complex that mediates the extraction of incompletely synthesized nascent chains from stalled ribosomes and their subsequent degradation. Probably generates substrates for RQC. This is Endonuclease MutS2 from Helicobacter pylori (strain J99 / ATCC 700824) (Campylobacter pylori J99).